The primary structure comprises 177 residues: Thymidine kinase (177 aa).

ATP is bound at residue 11–18; the sequence is GPMFSGKS. Glutamate 83 serves as the catalytic Proton acceptor. Phenylalanine 113 is a substrate binding site. Positions 138 and 141 each coordinate Zn(2+). 157–161 is a binding site for substrate; it reads IEIIG. Residues cysteine 170 and cysteine 173 each contribute to the Zn(2+) site.

It belongs to the thymidine kinase family. Homotetramer. Two molecules of substrate bind to each enzyme tetramer.

It catalyses the reaction thymidine + ATP = dTMP + ADP + H(+). In terms of biological role, phosphorylates thymidine and thymidine analogs, such as azidothymidine (AZT). Part of the salvage pathway for pyrimidine deoxyribonucleotide synthesis. The chain is Thymidine kinase (OPG101) from Homo sapiens (Human).